We begin with the raw amino-acid sequence, 207 residues long: Small ribosomal subunit protein bS6c (207 aa).

A chloroplast-targeting transit peptide spans 1-59 (MASSLCVSNSTICPLPNVSSQPLLSFSHSLRPFISKSKPMCASIQKRDGSQFVVKSQAL). The disordered stretch occupies residues 69-99 (GFGSDDDPTSPSGSGVSTALEDKPEPQCPPG). The span at 77-86 (TSPSGSGVST) shows a compositional bias: low complexity.

Belongs to the bacterial ribosomal protein bS6 family. In terms of assembly, part of the 30S ribosomal subunit.

It is found in the plastid. The protein localises to the chloroplast. Functionally, binds together with bS18 to 16S ribosomal RNA. The protein is Small ribosomal subunit protein bS6c (RPS6) of Arabidopsis thaliana (Mouse-ear cress).